A 367-amino-acid chain; its full sequence is Molybdopterin synthase catalytic subunit (367 aa).

Residues 101–102 (HR), K117, and 124–126 (KKE) contribute to the substrate site.

Belongs to the MoaE family. MOCS2B subfamily. As to quaternary structure, heterotetramer; composed of 2 small (Mocs2A) and 2 large (Mocs2B) subunits.

The protein localises to the cytoplasm. The catalysed reaction is 2 [molybdopterin-synthase sulfur-carrier protein]-C-terminal-Gly-aminoethanethioate + cyclic pyranopterin phosphate + H2O = molybdopterin + 2 [molybdopterin-synthase sulfur-carrier protein]-C-terminal Gly-Gly + 2 H(+). Its pathway is cofactor biosynthesis; molybdopterin biosynthesis. Its function is as follows. Catalytic subunit of the molybdopterin synthase complex, a complex that catalyzes the conversion of precursor Z into molybdopterin. Acts by mediating the incorporation of 2 sulfur atoms from thiocarboxylated Mocs2A into precursor Z to generate a dithiolene group. The polypeptide is Molybdopterin synthase catalytic subunit (Drosophila erecta (Fruit fly)).